The chain runs to 169 residues: Peptide methionine sulfoxide reductase MsrA (169 aa).

The active site involves cysteine 13.

This sequence belongs to the MsrA Met sulfoxide reductase family.

It catalyses the reaction L-methionyl-[protein] + [thioredoxin]-disulfide + H2O = L-methionyl-(S)-S-oxide-[protein] + [thioredoxin]-dithiol. The catalysed reaction is [thioredoxin]-disulfide + L-methionine + H2O = L-methionine (S)-S-oxide + [thioredoxin]-dithiol. Its function is as follows. Has an important function as a repair enzyme for proteins that have been inactivated by oxidation. Catalyzes the reversible oxidation-reduction of methionine sulfoxide in proteins to methionine. This chain is Peptide methionine sulfoxide reductase MsrA, found in Mycolicibacterium vanbaalenii (strain DSM 7251 / JCM 13017 / BCRC 16820 / KCTC 9966 / NRRL B-24157 / PYR-1) (Mycobacterium vanbaalenii).